The chain runs to 303 residues: N-acetyl-D-glucosamine kinase (303 aa).

ATP is bound by residues 4-11 (GFDIGGTK) and 133-140 (GVGGGLIF). Residues histidine 157, cysteine 177, cysteine 179, and cysteine 184 each coordinate Zn(2+).

It belongs to the ROK (NagC/XylR) family. NagK subfamily.

It catalyses the reaction N-acetyl-D-glucosamine + ATP = N-acetyl-D-glucosamine 6-phosphate + ADP + H(+). The protein operates within cell wall biogenesis; peptidoglycan recycling. Functionally, catalyzes the phosphorylation of N-acetyl-D-glucosamine (GlcNAc) derived from cell-wall degradation, yielding GlcNAc-6-P. This chain is N-acetyl-D-glucosamine kinase, found in Escherichia coli O157:H7.